We begin with the raw amino-acid sequence, 205 residues long: GTP cyclohydrolase 1 (205 aa).

Zn(2+) is bound by residues cysteine 94, histidine 97, and cysteine 165.

This sequence belongs to the GTP cyclohydrolase I family. Homomer.

It carries out the reaction GTP + H2O = 7,8-dihydroneopterin 3'-triphosphate + formate + H(+). Its pathway is cofactor biosynthesis; 7,8-dihydroneopterin triphosphate biosynthesis; 7,8-dihydroneopterin triphosphate from GTP: step 1/1. The protein is GTP cyclohydrolase 1 of Sinorhizobium fredii (strain NBRC 101917 / NGR234).